A 235-amino-acid chain; its full sequence is IIGGDECNINEHRFLVALYDVWSGSFLCGGTLINQEWVLTAAHCNMSNIYIYLGMHNQSVQFDDEERRYPKEKYLFRCSKNFTKWDKDIMLIRLNKPVRNSEHIAPLSLPSSPPIVGSVCRVMGWGTITSPNETLPDVPRCVNINLFNYTVCRGVFPRLPERSRILCAGVLEGGIDTCKRDSGGPLICNGQFQGIVSWGPKRCAQPRKPALYSKVFDHLDWIQSIIAGNKTVNCP.

In terms of domain architecture, Peptidase S1 spans 1 to 227 (IIGGDECNIN…HLDWIQSIIA (227 aa)). 6 disulfide bridges follow: C7/C141, C28/C44, C78/C234, C120/C188, C152/C167, and C178/C203. The active-site Charge relay system is H43. Residues N45, N57, and N81 are each glycosylated (N-linked (GlcNAc...) asparagine). D88 (charge relay system) is an active-site residue. 2 N-linked (GlcNAc...) asparagine glycosylation sites follow: N132 and N148. S182 serves as the catalytic Charge relay system. N-linked (GlcNAc...) asparagine glycosylation is present at N229.

It belongs to the peptidase S1 family. Snake venom subfamily. As to quaternary structure, monomer. Glycosylated. Expressed by the venom gland.

The protein resides in the secreted. Its activity is regulated as follows. Not inhibited by hirudin. Functionally, thrombin-like snake venom serine protease that has coagulant activity by releasing fibrinopeptides A and B from fibrinogen alpha (FGA) and beta (FGB), with a preference for beta chain. This Agkistrodon bilineatus (Cantil) protein is Thrombin-like enzyme bilineobin.